The following is a 436-amino-acid chain: Protein 60A (436 aa).

The first 27 residues, 1-27 (MTASLVVLPSLWLILIIFTAPYTHCTQ), serve as a signal peptide directing secretion. Residues 28–317 (SGIYIDNGKD…STLHQRKKSK (290 aa)) constitute a propeptide that is removed on maturation. 4 N-linked (GlcNAc...) asparagine glycosylation sites follow: Asn102, Asn114, Asn217, and Asn229. Positions 293-322 (IKSTSGHSTQKRTKRSTLHQRKKSKSEPVN) are disordered. The segment covering 301–316 (TQKRTKRSTLHQRKKS) has biased composition (basic residues). Intrachain disulfides connect Cys335–Cys401, Cys364–Cys433, and Cys368–Cys435. Asn377 is a glycosylation site (N-linked (GlcNAc...) asparagine).

The protein belongs to the TGF-beta family. Homodimer; disulfide-linked.

The protein resides in the secreted. The polypeptide is Protein 60A (gbb) (Drosophila virilis (Fruit fly)).